The sequence spans 178 residues: ATP synthase subunit delta (178 aa).

This sequence belongs to the ATPase delta chain family. As to quaternary structure, F-type ATPases have 2 components, F(1) - the catalytic core - and F(0) - the membrane proton channel. F(1) has five subunits: alpha(3), beta(3), gamma(1), delta(1), epsilon(1). F(0) has three main subunits: a(1), b(2) and c(10-14). The alpha and beta chains form an alternating ring which encloses part of the gamma chain. F(1) is attached to F(0) by a central stalk formed by the gamma and epsilon chains, while a peripheral stalk is formed by the delta and b chains.

Its subcellular location is the cell membrane. F(1)F(0) ATP synthase produces ATP from ADP in the presence of a proton or sodium gradient. F-type ATPases consist of two structural domains, F(1) containing the extramembraneous catalytic core and F(0) containing the membrane proton channel, linked together by a central stalk and a peripheral stalk. During catalysis, ATP synthesis in the catalytic domain of F(1) is coupled via a rotary mechanism of the central stalk subunits to proton translocation. In terms of biological role, this protein is part of the stalk that links CF(0) to CF(1). It either transmits conformational changes from CF(0) to CF(1) or is implicated in proton conduction. The protein is ATP synthase subunit delta of Desulfitobacterium hafniense (strain DSM 10664 / DCB-2).